We begin with the raw amino-acid sequence, 232 residues long: Ribonuclease P protein component 3 (232 aa).

This sequence belongs to the eukaryotic/archaeal RNase P protein component 3 family. As to quaternary structure, consists of a catalytic RNA component and at least 4-5 protein subunits. Forms a subcomplex with Rnp2 which stimulates the catalytic RNA.

Its subcellular location is the cytoplasm. It catalyses the reaction Endonucleolytic cleavage of RNA, removing 5'-extranucleotides from tRNA precursor.. Functionally, part of ribonuclease P, a protein complex that generates mature tRNA molecules by cleaving their 5'-ends. This is Ribonuclease P protein component 3 from Methanocaldococcus jannaschii (strain ATCC 43067 / DSM 2661 / JAL-1 / JCM 10045 / NBRC 100440) (Methanococcus jannaschii).